The primary structure comprises 255 residues: Tritrans,polycis-undecaprenyl-diphosphate synthase (geranylgeranyl-diphosphate specific) (255 aa).

The active site involves Asp-34. Asp-34 contacts Mg(2+). Residues 35–38, His-51, and 79–81 contribute to the substrate site; these read GNRR and STE. Residue Asn-82 is the Proton acceptor of the active site. Substrate is bound by residues Phe-83, Arg-85, Arg-204, and 210–212; that span reads RIS. Residue Glu-223 participates in Mg(2+) binding.

The protein belongs to the UPP synthase family. In terms of assembly, homodimer. Mg(2+) serves as cofactor.

It catalyses the reaction geranylgeranyl diphosphate + 7 isopentenyl diphosphate = tri-trans,hepta-cis-undecaprenyl diphosphate + 7 diphosphate. Its function is as follows. Catalyzes the sequential condensation of isopentenyl diphosphate (IPP) with geranylgeranyl diphosphate (GGPP) to yield (2Z,6Z,10Z,14Z,18Z,22Z,26Z,30E,34E,38E)-undecaprenyl diphosphate (tritrans,heptacis-UPP). It is probably the precursor of glycosyl carrier lipids. This Picrophilus torridus (strain ATCC 700027 / DSM 9790 / JCM 10055 / NBRC 100828 / KAW 2/3) protein is Tritrans,polycis-undecaprenyl-diphosphate synthase (geranylgeranyl-diphosphate specific).